Consider the following 95-residue polypeptide: UPF0298 protein LVIS_1401 (95 aa).

It belongs to the UPF0298 family.

Its subcellular location is the cytoplasm. This Levilactobacillus brevis (strain ATCC 367 / BCRC 12310 / CIP 105137 / JCM 1170 / LMG 11437 / NCIMB 947 / NCTC 947) (Lactobacillus brevis) protein is UPF0298 protein LVIS_1401.